Reading from the N-terminus, the 92-residue chain is C-C motif chemokine 3 (92 aa).

The signal sequence occupies residues 1 to 23; sequence MQVSTAALAVLLCTMALCNQFSA. Cystine bridges form between C33/C57 and C34/C73.

This sequence belongs to the intercrine beta (chemokine CC) family. In terms of assembly, self-associates. Also heterodimer of MIP-1-alpha(4-69) and MIP-1-beta(3-69). Interacts with CCR1.

It is found in the secreted. Monokine with inflammatory and chemokinetic properties. Binds to CCR1, CCR4 and CCR5. One of the major HIV-suppressive factors produced by CD8+ T-cells. Recombinant MIP-1-alpha induces a dose-dependent inhibition of different strains of HIV-1, HIV-2, and simian immunodeficiency virus (SIV). The chain is C-C motif chemokine 3 (CCL3) from Pan troglodytes (Chimpanzee).